We begin with the raw amino-acid sequence, 215 residues long: Protein-L-isoaspartate O-methyltransferase 1 (215 aa).

The active site involves Ser61.

It belongs to the methyltransferase superfamily. L-isoaspartyl/D-aspartyl protein methyltransferase family.

The protein resides in the cytoplasm. It catalyses the reaction [protein]-L-isoaspartate + S-adenosyl-L-methionine = [protein]-L-isoaspartate alpha-methyl ester + S-adenosyl-L-homocysteine. In terms of biological role, catalyzes the methyl esterification of L-isoaspartyl residues in peptides and proteins that result from spontaneous decomposition of normal L-aspartyl and L-asparaginyl residues. It plays a role in the repair and/or degradation of damaged proteins. The polypeptide is Protein-L-isoaspartate O-methyltransferase 1 (Pelobacter propionicus (strain DSM 2379 / NBRC 103807 / OttBd1)).